A 111-amino-acid polypeptide reads, in one-letter code: Wound-induced proteinase inhibitor 1 (111 aa).

The N-terminal stretch at 1–23 (MEAKFAHIILFFLLAFSFETLMA) is a signal peptide. A propeptide spanning residues 24-36 (RKESDGPEVIKLL) is cleaved from the precursor.

This sequence belongs to the protease inhibitor I13 (potato type I serine protease inhibitor) family.

Its subcellular location is the secreted. In Solanum peruvianum (Peruvian tomato), this protein is Wound-induced proteinase inhibitor 1.